The sequence spans 736 residues: 1,4-alpha-glucan branching enzyme GlgB 2 (736 aa).

Aspartate 415 (nucleophile) is an active-site residue. Glutamate 468 functions as the Proton donor in the catalytic mechanism.

The protein belongs to the glycosyl hydrolase 13 family. GlgB subfamily. As to quaternary structure, monomer.

The enzyme catalyses Transfers a segment of a (1-&gt;4)-alpha-D-glucan chain to a primary hydroxy group in a similar glucan chain.. It participates in glycan biosynthesis; glycogen biosynthesis. Its function is as follows. Catalyzes the formation of the alpha-1,6-glucosidic linkages in glycogen by scission of a 1,4-alpha-linked oligosaccharide from growing alpha-1,4-glucan chains and the subsequent attachment of the oligosaccharide to the alpha-1,6 position. The polypeptide is 1,4-alpha-glucan branching enzyme GlgB 2 (Rhizobium johnstonii (strain DSM 114642 / LMG 32736 / 3841) (Rhizobium leguminosarum bv. viciae)).